The following is a 328-amino-acid chain: H-2 class I histocompatibility antigen, K-Q alpha chain (328 aa).

The segment at 1–71 (PRFISVGYVD…LLRYYNQSAG (71 aa)) is alpha-1. Topologically, residues 1–265 (PRFISVGYVD…EPPPSAVSNT (265 aa)) are extracellular. N-linked (GlcNAc...) asparagine glycosylation occurs at Asn67. The segment at 72-163 (GSHTIQRMYG…KNGNATLLRT (92 aa)) is alpha-2. A disulfide bond links Cys82 and Cys145. Residue Asn157 is glycosylated (N-linked (GlcNAc...) asparagine). The interval 164 to 255 (DSPKAHVTHH…GLPKPLTLRW (92 aa)) is alpha-3. An Ig-like C1-type domain is found at 166 to 252 (PKAHVTHHSR…YHQGLPKPLT (87 aa)). Residues Cys184 and Cys240 are joined by a disulfide bond. Residues 256 to 265 (EPPPSAVSNT) form a connecting peptide region. The helical transmembrane segment at 266-289 (VIIAVLVVLGAAIVTGAVVAFVMM) threads the bilayer. The Cytoplasmic portion of the chain corresponds to 290-328 (RRRNTGGKGGDYALAPGSQTSDLSLPDCKVMVHDPHSLA). Phosphoserine occurs at positions 310 and 313.

Belongs to the MHC class I family. Heterodimer of an alpha chain and a beta chain (beta-2-microglobulin).

The protein localises to the membrane. Involved in the presentation of foreign antigens to the immune system. This Mus musculus (Mouse) protein is H-2 class I histocompatibility antigen, K-Q alpha chain (H2-K1).